A 411-amino-acid chain; its full sequence is D-ribitol-5-phosphate cytidylyltransferase (411 aa).

It belongs to the IspD/TarI cytidylyltransferase family. IspD subfamily. In terms of assembly, homodimer.

The protein resides in the cytoplasm. Its subcellular location is the cytosol. It carries out the reaction D-ribitol 5-phosphate + CTP + H(+) = CDP-L-ribitol + diphosphate. The catalysed reaction is D-ribose 5-phosphate + CTP + H(+) = CDP-D-ribose + diphosphate. It catalyses the reaction D-ribulose 5-phosphate + CTP + H(+) = CDP-D-ribulose + diphosphate. It participates in protein modification; protein glycosylation. Its function is as follows. Cytidylyltransferase required for protein O-linked mannosylation. Catalyzes the formation of CDP-ribitol nucleotide sugar from D-ribitol 5-phosphate. CDP-ribitol is a substrate of FKTN during the biosynthesis of the phosphorylated O-mannosyl trisaccharide (N-acetylgalactosamine-beta-3-N-acetylglucosamine-beta-4-(phosphate-6-)mannose), a carbohydrate structure present in alpha-dystroglycan (DAG1), which is required for binding laminin G-like domain-containing extracellular proteins with high affinity. Shows activity toward other pentose phosphate sugars and mediates formation of CDP-ribulose or CDP-ribose using CTP and ribulose-5-phosphate or ribose-5-phosphate, respectively. Not involved in dolichol production. This chain is D-ribitol-5-phosphate cytidylyltransferase (crppa), found in Xenopus tropicalis (Western clawed frog).